A 292-amino-acid chain; its full sequence is Elongation factor Ts (292 aa).

Positions 80-83 (TDFV) are involved in Mg(2+) ion dislocation from EF-Tu.

Belongs to the EF-Ts family.

The protein localises to the cytoplasm. Functionally, associates with the EF-Tu.GDP complex and induces the exchange of GDP to GTP. It remains bound to the aminoacyl-tRNA.EF-Tu.GTP complex up to the GTP hydrolysis stage on the ribosome. The protein is Elongation factor Ts of Mycoplasmopsis synoviae (strain 53) (Mycoplasma synoviae).